Consider the following 270-residue polypeptide: Phosphatidylglycerol--prolipoprotein diacylglyceryl transferase (270 aa).

Helical transmembrane passes span 10 to 30, 56 to 76, 92 to 112, 120 to 140, 175 to 195, 202 to 222, and 237 to 257; these read VAVA…LVGI, LIFW…VLFY, WKGG…AWWF, FFQL…AGRI, SQLY…NLYA, MAVS…VEFV, and VTMG…LIWL. Arginine 139 lines the a 1,2-diacyl-sn-glycero-3-phospho-(1'-sn-glycerol) pocket.

This sequence belongs to the Lgt family.

It is found in the cell inner membrane. It catalyses the reaction L-cysteinyl-[prolipoprotein] + a 1,2-diacyl-sn-glycero-3-phospho-(1'-sn-glycerol) = an S-1,2-diacyl-sn-glyceryl-L-cysteinyl-[prolipoprotein] + sn-glycerol 1-phosphate + H(+). Its pathway is protein modification; lipoprotein biosynthesis (diacylglyceryl transfer). In terms of biological role, catalyzes the transfer of the diacylglyceryl group from phosphatidylglycerol to the sulfhydryl group of the N-terminal cysteine of a prolipoprotein, the first step in the formation of mature lipoproteins. The protein is Phosphatidylglycerol--prolipoprotein diacylglyceryl transferase of Pseudomonas syringae pv. tomato (strain ATCC BAA-871 / DC3000).